The sequence spans 218 residues: Glutathione S-transferase Mu 4 (218 aa).

Residues 2–88 form the GST N-terminal domain; sequence SMTLGYWDIR…YIARKHNLCG (87 aa). Residues 7-8, 46-50, 59-60, and 72-73 contribute to the glutathione site; these read YW, WLNEK, NL, and QS. The GST C-terminal domain occupies 90–208; it reads TEEEKIRVDI…KSSRFLPKPL (119 aa). Tyr116 lines the substrate pocket.

This sequence belongs to the GST superfamily. Mu family. As to quaternary structure, homodimer. As to expression, expressed in a wide variety of tissues.

Its subcellular location is the cytoplasm. The catalysed reaction is RX + glutathione = an S-substituted glutathione + a halide anion + H(+). The enzyme catalyses 1-chloro-2,4-dinitrobenzene + glutathione = 2,4-dinitrophenyl-S-glutathione + chloride + H(+). It carries out the reaction (13S,14S)-epoxy-(4Z,7Z,9E,11E,16Z,19Z)-docosahexaenoate + glutathione = (13R)-S-glutathionyl-(14S)-hydroxy-(4Z,7Z,9E,11E,16Z,19Z)-docosahexaenoate. It catalyses the reaction leukotriene C4 = leukotriene A4 + glutathione. Conjugation of reduced glutathione to a wide number of exogenous and endogenous hydrophobic electrophiles. Catalyzes the conjugation of leukotriene A4 with reduced glutathione (GSH) to form leukotriene C4. Can also catalyze the transfer of a glutathionyl group from glutathione (GSH) to 13(S),14(S)-epoxy-docosahexaenoic acid to form maresin conjugate in tissue regeneration 1 (MCTR1), a bioactive lipid mediator that possess potent anti-inflammatory and proresolving actions. The sequence is that of Glutathione S-transferase Mu 4 (GSTM4) from Homo sapiens (Human).